The chain runs to 282 residues: Protoheme IX farnesyltransferase (282 aa).

9 consecutive transmembrane segments (helical) span residues 9 to 29 (LAKP…FLLA), 39 to 59 (LPLF…GCVF), 79 to 99 (LVTG…LLIL), 102 to 122 (LVLY…GFIV), 139 to 159 (VLGG…VVNI), 165 to 185 (LALF…IAML), 210 to 230 (IMLF…VLGS), 231 to 251 (ADLF…YKSI), and 261 to 281 (VFAK…CLTM).

The protein belongs to the UbiA prenyltransferase family. Protoheme IX farnesyltransferase subfamily.

It is found in the cell inner membrane. It carries out the reaction heme b + (2E,6E)-farnesyl diphosphate + H2O = Fe(II)-heme o + diphosphate. The protein operates within porphyrin-containing compound metabolism; heme O biosynthesis; heme O from protoheme: step 1/1. In terms of biological role, converts heme B (protoheme IX) to heme O by substitution of the vinyl group on carbon 2 of heme B porphyrin ring with a hydroxyethyl farnesyl side group. This Francisella tularensis subsp. holarctica (strain LVS) protein is Protoheme IX farnesyltransferase.